A 287-amino-acid polypeptide reads, in one-letter code: Inositol-1-monophosphatase (287 aa).

Mg(2+) is bound by residues glutamate 79, aspartate 96, leucine 98, and aspartate 99. Glutamate 79 lines the substrate pocket. Residues 98–101 (LDGT), arginine 195, and aspartate 224 each bind substrate. Aspartate 224 provides a ligand contact to Mg(2+).

This sequence belongs to the inositol monophosphatase superfamily. It depends on Mg(2+) as a cofactor.

It catalyses the reaction a myo-inositol phosphate + H2O = myo-inositol + phosphate. The polypeptide is Inositol-1-monophosphatase (suhB) (Synechocystis sp. (strain ATCC 27184 / PCC 6803 / Kazusa)).